Consider the following 563-residue polypeptide: MDVGELLSYQPNRGTKRPRDDEEEELKMRRRQAGTRERGRYREEEMTVVEEADDDKKRLLQIIDREGEEEEEEEEPLDESSVKKMILTFEKRSYKNQELRIKFPDNPEKFMESELDLNDIIQEMHVVATMPDLYHLLVELNAVQSLLGLLGHDNTDVSIAVVDLLQELTDIDTLHESEEGAEVLTDALVDGQVVALLVQDLERLDESVKEEADGVHNTLAIVENMAEFRPEMCTEAAQQGLLQWLLKRLKAKMPFDANKLYCSEVLAILLQDNDENRELLGELDGIDVLLQQLSVFKRHNPSTAEEQEMMENLFDSLCSCLMLSSNRERFLKGEGLQLMNLMLREKKISRSSALKVLDHAMIGPEGTDNCHKFVDILGLRTIFPLFMKSPRKIKKVGTTEKEHEEHVCSILASLLRNLRGQQRTRLLNKFTENDSEKVDRLMELHFKYLDAVQVADKKIEGEKHDMVRRGEIIDNDIEDEFYLRRLDAGLFVLQHICYIMAEICNANVPQIRQRVHQILNMRGSSIKIVRHIIKEYAENIGDGRSPEFRESEQKRILALLENF.

The residue at position 1 (Met1) is an N-acetylmethionine. Residues 1–49 (MDVGELLSYQPNRGTKRPRDDEEEELKMRRRQAGTRERGRYREEEMTVV) are disordered. A Nuclear localization signal motif is present at residues 16–33 (KRPRDDEEEELKMRRRQA). A compositionally biased stretch (basic and acidic residues) spans 34–45 (GTRERGRYREEE). HEAT repeat units follow at residues 79 to 129 (ESSV…VVAT) and 134 to 176 (YHLL…TLHE). Lys91 is modified (N6-acetyllysine). Positions 130–140 (MPDLYHLLVEL) match the Nuclear export signal (NES) motif. ARM repeat units follow at residues 178–228 (EEGA…MAEF), 229–273 (RPEM…LQDN), 274–323 (DENR…CLML), 325–363 (SNRE…AMIG), and 364–417 (PEGT…LLRN). The residue at position 389 (Ser389) is a Phosphoserine. Residues 476–540 (DIEDEFYLRR…HIIKEYAENI (65 aa)) are a coiled coil. Residue Ser545 is modified to Phosphoserine.

In terms of assembly, component of the PRP19-CDC5L splicing complex composed of a core complex comprising a homotetramer of PRPF19, CDC5L, PLRG1 and BCAS2, and at least three less stably associated proteins CTNNBL1, CWC15 and HSPA8. Interacts directly with CWC15 and CDC5L in the complex. Interacts with AICDA; the interaction is important for the antibody diversification activity of AICDA. Interacts with PRPF31 (via its NLS). Interacts (via its N-terminal NLS) with KPNA1 and KPNA2.

It localises to the nucleus. In terms of biological role, component of the PRP19-CDC5L complex that forms an integral part of the spliceosome and is required for activating pre-mRNA splicing. Participates in AID/AICDA-mediated somatic hypermutation (SHM) and class-switch recombination (CSR), 2 processes resulting in the production of high-affinity, mutated isotype-switched antibodies. The sequence is that of Beta-catenin-like protein 1 (CTNNBL1) from Bos taurus (Bovine).